The sequence spans 141 residues: Sigma factor binding protein 2, chloroplastic (141 aa).

Polar residues predominate over residues 1–20; sequence MDQSSSTLLINQRKSSSSPT. A disordered region spans residues 1 to 36; it reads MDQSSSTLLINQRKSSSSPTRIPPKQKRKSTTTHKP. Residues 1–38 constitute a chloroplast transit peptide; that stretch reads MDQSSSTLLINQRKSSSSPTRIPPKQKRKSTTTHKPIK. The Bipartite nuclear localization signal signature appears at 13 to 29; it reads RKSSSSPTRIPPKQKRK. Residues 24–36 are compositionally biased toward basic residues; the sequence is PKQKRKSTTTHKP. The short motif at 55–64 is the VQ element; the sequence is FRELVQELTG.

Interacts with sigma factors in chloroplast. Interacts with WRKY33 in the nucleus.

Its subcellular location is the plastid. The protein localises to the chloroplast. It localises to the nucleus. Functionally, functions as activator of WRKY33 in plant defense against necrotrophic pathogens by stimulating the DNA-binding activity of WRKY33. This is Sigma factor binding protein 2, chloroplastic (SIB2) from Arabidopsis thaliana (Mouse-ear cress).